We begin with the raw amino-acid sequence, 339 residues long: MVIQKNWQELIKPNKLQVTAGDDPKRVATVVAEPLERGFGTTLGNSLRRVLLSSLQGAAVTSVQIDGVLHEFSSIPGVREDVTDIVLNIKTIAIRSQTDQPKRMTLRKTGPGLVTAGDIGAVGDIQILNPDLVICTLDDGAEIRMEFTVATGKGYVPAERNRPEDAPIGLIPVDALYSPVTKVSYRVETTREGQDLDKDKLTITLETNGAVSPEDALAYAARIIQDQLQVFVNFEEPRKEEAAPLAPQLPFNPALLKKVDELELSVRSANCLKNDNIVYIGDLIQKSEGEMLRTPNFGRKSLNEIKEVLAGMGLHLGMDVPGWPPENIEDLAKRFEEHY.

Positions 1 to 235 are alpha N-terminal domain (alpha-NTD); that stretch reads MVIQKNWQEL…DQLQVFVNFE (235 aa). Residues 251–339 form an alpha C-terminal domain (alpha-CTD) region; sequence FNPALLKKVD…DLAKRFEEHY (89 aa).

Belongs to the RNA polymerase alpha chain family. As to quaternary structure, homodimer. The RNAP catalytic core consists of 2 alpha, 1 beta, 1 beta' and 1 omega subunit. When a sigma factor is associated with the core the holoenzyme is formed, which can initiate transcription.

It catalyses the reaction RNA(n) + a ribonucleoside 5'-triphosphate = RNA(n+1) + diphosphate. Its function is as follows. DNA-dependent RNA polymerase catalyzes the transcription of DNA into RNA using the four ribonucleoside triphosphates as substrates. The protein is DNA-directed RNA polymerase subunit alpha of Methylorubrum extorquens (strain CM4 / NCIMB 13688) (Methylobacterium extorquens).